The following is a 713-amino-acid chain: Endopolyphosphatase (713 aa).

Residues Met1 to Arg19 are Cytoplasmic-facing. The helical; Signal-anchor for type II membrane protein transmembrane segment at Ile20 to His40 threads the bilayer. The Vacuolar segment spans residues Gln41–Gly713. The segment covering Ser399–Leu418 has biased composition (acidic residues). Positions Ser399–Leu430 are disordered. 2 N-linked (GlcNAc...) asparagine glycosylation sites follow: Asn507 and Asn645. A compositionally biased stretch (basic residues) spans Val640–Asp659. The disordered stretch occupies residues Val640–Val684. Basic and acidic residues predominate over residues Lys660–Arg683.

This sequence belongs to the endopolyphosphatase PPN1 family. A divalent metal cation serves as cofactor. Post-translationally, processing by proteases in the vacuole may be required for activation.

Its subcellular location is the vacuole membrane. The enzyme catalyses [phosphate](n+1) + n H2O = (n+1) phosphate + n H(+). In terms of biological role, catalyzes the hydrolysis of inorganic polyphosphate (polyP) chains of many hundreds of phosphate residues into shorter lengths. This chain is Endopolyphosphatase (PPN1), found in Debaryomyces hansenii (strain ATCC 36239 / CBS 767 / BCRC 21394 / JCM 1990 / NBRC 0083 / IGC 2968) (Yeast).